Consider the following 745-residue polypeptide: AMP deaminase 1 (745 aa).

Thr-79 is subject to Phosphothreonine. Ser-83 bears the Phosphoserine mark. A Phosphotyrosine modification is found at Tyr-214. Zn(2+)-binding residues include His-301 and His-303. Residues His-303 and 372–377 each bind substrate; that span reads KFNDKY. A Phosphoserine modification is found at Ser-439. Position 570 (His-570) interacts with Zn(2+). Residue Glu-573 participates in substrate binding. Catalysis depends on His-592, which acts as the Proton acceptor. Residue Asp-647 participates in Zn(2+) binding. Substrate is bound at residue 648–651; sequence DPMQ.

The protein belongs to the metallo-dependent hydrolases superfamily. Adenosine and AMP deaminases family. As to quaternary structure, homotetramer. Zn(2+) serves as cofactor.

It catalyses the reaction AMP + H2O + H(+) = IMP + NH4(+). Its pathway is purine metabolism; IMP biosynthesis via salvage pathway; IMP from AMP: step 1/1. Functionally, AMP deaminase plays a critical role in energy metabolism. The sequence is that of AMP deaminase 1 from Mus musculus (Mouse).